Reading from the N-terminus, the 140-residue chain is Ribosome-binding factor A (140 aa).

Residues 118–133 show a composition bias toward basic and acidic residues; that stretch reads DEAKQQKHNGKDKTDT. The tract at residues 118–140 is disordered; the sequence is DEAKQQKHNGKDKTDTADSEGEE.

Belongs to the RbfA family. In terms of assembly, monomer. Binds 30S ribosomal subunits, but not 50S ribosomal subunits or 70S ribosomes.

Its subcellular location is the cytoplasm. Its function is as follows. One of several proteins that assist in the late maturation steps of the functional core of the 30S ribosomal subunit. Associates with free 30S ribosomal subunits (but not with 30S subunits that are part of 70S ribosomes or polysomes). Required for efficient processing of 16S rRNA. May interact with the 5'-terminal helix region of 16S rRNA. This Shewanella woodyi (strain ATCC 51908 / MS32) protein is Ribosome-binding factor A.